Consider the following 298-residue polypeptide: Fe(II)/2-oxoglutarate-dependent dioxygenase nvfF (298 aa).

3 residues coordinate Fe cation: H137, D139, and H212.

The protein belongs to the PhyH family. As to quaternary structure, homodimer. The cofactor is Fe cation.

It carries out the reaction fumigatonoid C + 2-oxoglutarate + O2 = novofumigatonin + succinate + CO2 + H2O. The protein operates within secondary metabolite biosynthesis; terpenoid biosynthesis. In terms of biological role, fe(II)/2-oxoglutarate-dependent dioxygenase; part of the gene cluster that mediates the biosynthesis of novofumigatonin, a heavily oxygenated meroterpenoid containing a unique orthoester moiety. The first step of the pathway is the synthesis of 3,5-dimethylorsellinic acid (DMOA) by the polyketide synthase nvfA via condensation of one acetyl-CoA starter unit with 3 malonyl-CoA units and 2 methylations. DMOA is then converted to farnesyl-DMOA by the farnesyltransferase nvfB. Epoxydation by FAD-dependent monooxygenase nvfK, followed by a protonation-initiated cyclization catalyzed by the terpene cyclase nvfL leads to the production of asnavolin H. The short chain dehydrogenase nvfC then as a 3-OH dehydrogenase of asnovolin H to yield chemesin D. There are two branches to synthesize asnovolin A from chemesin D. In one branch, chemesin D undergoes Baeyer-Villiger oxidation by nvfH, methylation by nvfJ, and enoyl reduction by the nvfM D enoylreductase that reduces the double bond between C-5'and C-6', to form respectively asnovolin I, asnovolin K, and asnovolin A. In the other branch, the methylation precedes the Baeyer-Villiger oxidation and the enoyl reduction to yield asnovolin A via the asnovolin J intermediate. Asnovolin A is further converted to fumigatonoid A by the Fe(II)/2-oxoglutarate-dependent dioxygenase nvfI that catalyzes an endoperoxidation reaction. The alpha/beta hydrolase nvfD then acts as an epimerase that converts fumigatonoid A to its C-5' epimer, which then undergoes spontaneous or nvfD-catalyzed lactonization. The following step utilizes the ketoreductase nvfG to produce fumigatonoid B. The dioxygenase nvfE further converts fumigatonoid B into fumigatonoid C. Finally the Fe(II)/2-oxoglutarate-dependent dioxygenase nvfF catalyzes two rounds of oxidation to transform fumigatonoid C into the end product, novofumigatonin A. This chain is Fe(II)/2-oxoglutarate-dependent dioxygenase nvfF, found in Aspergillus novofumigatus (strain IBT 16806).